We begin with the raw amino-acid sequence, 1086 residues long: Isoleucine--tRNA ligase (1086 aa).

The 'HIGH' region motif lies at proline 53–histidine 63. The 'KMSKS' region signature appears at lysine 624–arginine 628. ATP is bound at residue lysine 627.

This sequence belongs to the class-I aminoacyl-tRNA synthetase family. IleS type 2 subfamily. As to quaternary structure, monomer. It depends on Zn(2+) as a cofactor.

The protein resides in the cytoplasm. It carries out the reaction tRNA(Ile) + L-isoleucine + ATP = L-isoleucyl-tRNA(Ile) + AMP + diphosphate. In terms of biological role, catalyzes the attachment of isoleucine to tRNA(Ile). As IleRS can inadvertently accommodate and process structurally similar amino acids such as valine, to avoid such errors it has two additional distinct tRNA(Ile)-dependent editing activities. One activity is designated as 'pretransfer' editing and involves the hydrolysis of activated Val-AMP. The other activity is designated 'posttransfer' editing and involves deacylation of mischarged Val-tRNA(Ile). This Rickettsia prowazekii (strain Madrid E) protein is Isoleucine--tRNA ligase.